Here is a 484-residue protein sequence, read N- to C-terminus: Probable cytosol aminopeptidase (484 aa).

Mn(2+)-binding residues include K256 and D261. K268 is an active-site residue. Residues D279, D338, and E340 each contribute to the Mn(2+) site. The active site involves R342.

It belongs to the peptidase M17 family. Requires Mn(2+) as cofactor.

Its subcellular location is the cytoplasm. It catalyses the reaction Release of an N-terminal amino acid, Xaa-|-Yaa-, in which Xaa is preferably Leu, but may be other amino acids including Pro although not Arg or Lys, and Yaa may be Pro. Amino acid amides and methyl esters are also readily hydrolyzed, but rates on arylamides are exceedingly low.. The catalysed reaction is Release of an N-terminal amino acid, preferentially leucine, but not glutamic or aspartic acids.. Presumably involved in the processing and regular turnover of intracellular proteins. Catalyzes the removal of unsubstituted N-terminal amino acids from various peptides. The protein is Probable cytosol aminopeptidase of Actinobacillus succinogenes (strain ATCC 55618 / DSM 22257 / CCUG 43843 / 130Z).